The following is a 529-amino-acid chain: Listeriolysin O (529 aa).

Residues 1 to 24 (MKKIMLVFITLILISLPIAQQTEA) form the signal peptide. A disordered region spans residues 35–54 (SISSMAPPASPPASPKTPIE). 4 consecutive transmembrane segments (beta stranded) span residues 214–227 (ESQL…AFKA), 234–243 (VNFGAISEGK), 312–321 (STKVKAAFDA), and 329–341 (SGDV…IKNS). The Conserved undecapeptide signature appears at 483-493 (ECTGLAWEWWR). Positions 515–516 (TL) match the Cholesterol binding motif.

This sequence belongs to the cholesterol-dependent cytolysin family. In terms of assembly, homooligomeric pore complex of 35 to 50 subunits; when inserted in the host membrane.

Its subcellular location is the secreted. It is found in the host membrane. The protein resides in the host cell membrane. Its activity is regulated as follows. Activity of listeriolysin O is regulated on multiple levels. It should be high in the phagosome, thereby allowing escape of the bacteria from the phagosomal compartment. Then, once inside the host cytosol, the activity must be controlled to prevent lysis of the host plasma membrane and loss of the intracellular environment. In terms of biological role, a cholesterol-dependent toxin that causes cytolysis by forming pores in cholesterol containing host membranes. After binding to target membranes, the protein undergoes a major conformation change, leading to its insertion in the host membrane and formation of an oligomeric pore complex. Cholesterol is required for binding to host membranes, membrane insertion and pore formation; cholesterol binding is mediated by a Thr-Leu pair in the C-terminus. Acts as a major virulence factor required for the escape of bacteria from phagosomal vacuoles and entry into the host cytosol. Can be reversibly inactivated by oxidation. The protein is Listeriolysin O (hly) of Listeria monocytogenes serotype 4a (strain HCC23).